Consider the following 353-residue polypeptide: MALIRHCVTLLLILCCSRLCGAIQWLGLTVNGSRVAWNESEHCRLLDGLVPEQSQLCKRNLELMQSVVNAAKQAKLTCQMTFSDMRWNCSSVENAPNFTPDLSKGTRESAFVYALASATISHTIARACASGELPTCSCGATPAEVPGTGFRWGGCGDNLHYGLNMGSAFVDAPMKSSKSGGTQATKMINLHNNAVGRQVLMDSLETKCKCHGVSGSCSVKTCWKGLQDLPHIANELKSKYLGATKVIHRQTGTRRQLVPRELDIRPVRESELVYLVSSPDYCAKNPKLGSYGTQDRVCNKTSVGSDSCNLMCCGRGYNAYTETIVERCQCKYYWCCYVMCKKCERTVERYVCK.

An N-terminal signal peptide occupies residues 1–22; that stretch reads MALIRHCVTLLLILCCSRLCGA. Asn31, Asn38, and Asn88 each carry an N-linked (GlcNAc...) asparagine glycan. Disulfide bonds link Cys78/Cys89, Cys128/Cys136, Cys138/Cys155, Cys208/Cys222, and Cys210/Cys217. Ser214 is lipidated: O-palmitoleoyl serine; by PORCN. Residues Tyr274 and Tyr281 each carry the sulfotyrosine modification. Disulfide bonds link Cys282/Cys313, Cys298/Cys308, Cys312/Cys352, Cys328/Cys343, Cys330/Cys340, and Cys335/Cys336. A glycan (N-linked (GlcNAc...) asparagine) is linked at Asn299.

This sequence belongs to the Wnt family. As to quaternary structure, homodimer. Secreted homodimers form a complex with wnt5a homodimers; tyrosine sulfation of both wnt11 and wnt5a by tpst1 is required for this interaction. Interacts with the transmembrane receptor fzd7/fz7. Interacts with lrp6 and ryk. Interacts with tdgf1/frl1. Interacts weakly with frzb1 and strongly with frzb2/crescent. Interaction with frzb2/crescent antagonizes wnt11 function in the neuroectoderm, but enhances it in mesodermal tissue. Post-translationally, glycosylation is required for protein secretion. In terms of processing, palmitoleoylation is required for efficient binding to frizzled receptors. Depalmitoleoylation leads to Wnt signaling pathway inhibition.

The protein resides in the secreted. Its subcellular location is the extracellular space. It is found in the extracellular matrix. In terms of biological role, ligand for the frizzled7 transmembrane receptor. Primarily acts via non-canonical Wnt pathways mediated by either Ca(2+) and PKC, or by JNK and dvl2/dsh. Depending on the cellular context, can also signal via the canonical Wnt pathway mediated by beta-catenin and dvl2/dsh. May also inhibit canonical Wnt signaling. Maternally initiates dorsal/ventral axis formation by a canonical route, which signals via lrp6. In a complex with wnt5a, activates the canonical and non-canonical processes involved in axis formation. In the non-canonical pathway, acts through fzd7/fz7 to induce phosphorylation of dvl2/dsh. Signals through a non-canonical Wnt pathway to regulate convergent extension movements during gastrulation. Interactions with the secreted Wnt antagonist sfrp5 to coordinate foregut development, acting via a non-canonical wnt pathway whereby sfrp5 restricts wnt11b activity to prevent inappropriate foregut formation. Mediates cardiogenesis via non-canonical Wnt signaling involving JNK-activation and PKC. Acts redundantly with wnt11/wnt11r during pronephros induction. This is Protein Wnt-11b-2 from Xenopus tropicalis (Western clawed frog).